The primary structure comprises 266 residues: Chymotrypsin-like elastase family member 1 (266 aa).

The signal sequence occupies residues 1-16 (MLRFLVFATLVLYGHS). Residues 17 to 26 (TQDFPETNAR) constitute a propeptide, activation peptide. The Peptidase S1 domain maps to 27-264 (VVGGTEAGRN…YISWINKTIA (238 aa)). Cys-56 and Cys-72 are oxidised to a cystine. Residue His-71 is the Charge relay system of the active site. Residues Asp-85, Asn-87, Gln-90, and Glu-95 each coordinate Ca(2+). Asn-87 is a glycosylation site (N-linked (GlcNAc...) asparagine). The active-site Charge relay system is Asp-119. 3 disulfide bridges follow: Cys-153/Cys-220, Cys-184/Cys-200, and Cys-210/Cys-240. Ser-214 acts as the Charge relay system in catalysis. 2 N-linked (GlcNAc...) asparagine glycosylation sites follow: Asn-241 and Asn-260.

It belongs to the peptidase S1 family. Elastase subfamily. Requires Ca(2+) as cofactor.

It is found in the secreted. The enzyme catalyses Hydrolysis of proteins, including elastin. Preferential cleavage: Ala-|-Xaa.. Its function is as follows. Serine proteases that hydrolyze many proteins in addition to elastin. The protein is Chymotrypsin-like elastase family member 1 (CELA1) of Macaca fascicularis (Crab-eating macaque).